Here is a 172-residue protein sequence, read N- to C-terminus: Gastrula zinc finger protein XlCGF51.1A (172 aa).

6 consecutive C2H2-type zinc fingers follow at residues 6–28 (FSCS…NKIH), 34–56 (LICS…QRSH), 62–84 (FSCT…QRTH), 90–112 (FSCT…MLKH), 122–144 (LDCS…RKSH), and 150–172 (LQCS…QRVH).

The protein belongs to the krueppel C2H2-type zinc-finger protein family.

It is found in the nucleus. In terms of biological role, may be involved in transcriptional regulation. This chain is Gastrula zinc finger protein XlCGF51.1A, found in Xenopus laevis (African clawed frog).